The sequence spans 67 residues: Large ribosomal subunit protein bL31 (67 aa).

Belongs to the bacterial ribosomal protein bL31 family. Type A subfamily. Part of the 50S ribosomal subunit.

Functionally, binds the 23S rRNA. This Finegoldia magna (strain ATCC 29328 / DSM 20472 / WAL 2508) (Peptostreptococcus magnus) protein is Large ribosomal subunit protein bL31.